A 383-amino-acid polypeptide reads, in one-letter code: Dual-specificity RNA methyltransferase RlmN (383 aa).

The active-site Proton acceptor is E95. In terms of domain architecture, Radical SAM core spans 101-349 (EETRGTLCVS…TTVRKTRGDD (249 aa)). A disulfide bridge connects residues C108 and C354. Residues C115, C119, and C122 each contribute to the [4Fe-4S] cluster site. Residues 180-181 (GE), S212, 234-236 (SLH), and N311 contribute to the S-adenosyl-L-methionine site. C354 serves as the catalytic S-methylcysteine intermediate.

The protein belongs to the radical SAM superfamily. RlmN family. [4Fe-4S] cluster is required as a cofactor.

Its subcellular location is the cytoplasm. It catalyses the reaction adenosine(2503) in 23S rRNA + 2 reduced [2Fe-2S]-[ferredoxin] + 2 S-adenosyl-L-methionine = 2-methyladenosine(2503) in 23S rRNA + 5'-deoxyadenosine + L-methionine + 2 oxidized [2Fe-2S]-[ferredoxin] + S-adenosyl-L-homocysteine. It carries out the reaction adenosine(37) in tRNA + 2 reduced [2Fe-2S]-[ferredoxin] + 2 S-adenosyl-L-methionine = 2-methyladenosine(37) in tRNA + 5'-deoxyadenosine + L-methionine + 2 oxidized [2Fe-2S]-[ferredoxin] + S-adenosyl-L-homocysteine. Specifically methylates position 2 of adenine 2503 in 23S rRNA and position 2 of adenine 37 in tRNAs. m2A2503 modification seems to play a crucial role in the proofreading step occurring at the peptidyl transferase center and thus would serve to optimize ribosomal fidelity. The polypeptide is Dual-specificity RNA methyltransferase RlmN (Paraburkholderia phytofirmans (strain DSM 17436 / LMG 22146 / PsJN) (Burkholderia phytofirmans)).